A 381-amino-acid chain; its full sequence is Succinyl-diaminopimelate desuccinylase (381 aa).

His-76 serves as a coordination point for Zn(2+). Asp-78 is an active-site residue. Asp-107 contributes to the Zn(2+) binding site. Glu-140 acts as the Proton acceptor in catalysis. Residues Glu-141, Glu-169, and His-354 each contribute to the Zn(2+) site.

It belongs to the peptidase M20A family. DapE subfamily. In terms of assembly, homodimer. Zn(2+) serves as cofactor. Co(2+) is required as a cofactor.

It carries out the reaction N-succinyl-(2S,6S)-2,6-diaminopimelate + H2O = (2S,6S)-2,6-diaminopimelate + succinate. It functions in the pathway amino-acid biosynthesis; L-lysine biosynthesis via DAP pathway; LL-2,6-diaminopimelate from (S)-tetrahydrodipicolinate (succinylase route): step 3/3. Its function is as follows. Catalyzes the hydrolysis of N-succinyl-L,L-diaminopimelic acid (SDAP), forming succinate and LL-2,6-diaminopimelate (DAP), an intermediate involved in the bacterial biosynthesis of lysine and meso-diaminopimelic acid, an essential component of bacterial cell walls. The sequence is that of Succinyl-diaminopimelate desuccinylase from Gluconobacter oxydans (strain 621H) (Gluconobacter suboxydans).